Here is a 766-residue protein sequence, read N- to C-terminus: Serine/threonine-protein kinase DCLK2 (766 aa).

A disordered region spans residues 1–45 (MASTRSIELEHFEERDKRPRPGSRRGAPSSSGGSSSSGPKGNGLI). Over residues 7–19 (IELEHFEERDKRP) the composition is skewed to basic and acidic residues. A compositionally biased stretch (low complexity) spans 24–39 (RRGAPSSSGGSSSSGP). Position 61 is a phosphothreonine (T61). Doublecortin domains are found at residues 72–158 (KKAR…VDYT) and 197–280 (KLVT…AQDD). 2 stretches are compositionally biased toward low complexity: residues 300-312 (AVKY…PGPS) and 324-347 (TPSS…SPGS). Residues 300–378 (AVKYSGSKSP…ELDRCISPEG (79 aa)) are disordered. S362 carries the post-translational modification Phosphoserine. Residues 394-651 (YKIGKVIGDG…AGQILSHPWV (258 aa)) form the Protein kinase domain. ATP-binding positions include 400–408 (IGDGNFAVV) and K423. D515 serves as the catalytic Proton acceptor. Position 647 is a phosphoserine (S647). T666 carries the phosphothreonine modification. Residues 707–766 (CQDSGRPGMEPISPVPPSVEEIPVPGEAVPAPTPPESPTPHPPPAAPGGERAGTWRRHRD) are disordered. Low complexity predominate over residues 724–736 (SVEEIPVPGEAVP). The span at 737 to 752 (APTPPESPTPHPPPAA) shows a compositional bias: pro residues.

The protein belongs to the protein kinase superfamily. CAMK Ser/Thr protein kinase family. CaMK subfamily. Binds to and stabilizes microtubules. Interacts with MAPK8IP1/JIP-1, MAPK8IP2/JIP-2, MAPK9/JNK2, PPP1R9B/NEURABIN-2 and actin. Autophosphorylated. Expressed in the brain, heart and eyes.

It localises to the cytoplasm. Its subcellular location is the cytoskeleton. The catalysed reaction is L-seryl-[protein] + ATP = O-phospho-L-seryl-[protein] + ADP + H(+). It carries out the reaction L-threonyl-[protein] + ATP = O-phospho-L-threonyl-[protein] + ADP + H(+). Protein kinase with a significantly reduced C(a2+)/CAM affinity and dependence compared to other members of the CaMK family. May play a role in the down-regulation of CRE-dependent gene activation probably by phosphorylation of the CREB coactivator CRTC2/TORC2 and the resulting retention of TORC2 in the cytoplasm. The polypeptide is Serine/threonine-protein kinase DCLK2 (DCLK2) (Homo sapiens (Human)).